Consider the following 424-residue polypeptide: Serine hydroxymethyltransferase (424 aa).

Residues leucine 113 and 117 to 119 (GHL) each bind (6S)-5,6,7,8-tetrahydrofolate. An N6-(pyridoxal phosphate)lysine modification is found at lysine 222. 361–363 (SPF) serves as a coordination point for (6S)-5,6,7,8-tetrahydrofolate.

This sequence belongs to the SHMT family. As to quaternary structure, homodimer. Requires pyridoxal 5'-phosphate as cofactor.

The protein resides in the cytoplasm. The catalysed reaction is (6R)-5,10-methylene-5,6,7,8-tetrahydrofolate + glycine + H2O = (6S)-5,6,7,8-tetrahydrofolate + L-serine. Its pathway is one-carbon metabolism; tetrahydrofolate interconversion. It functions in the pathway amino-acid biosynthesis; glycine biosynthesis; glycine from L-serine: step 1/1. In terms of biological role, catalyzes the reversible interconversion of serine and glycine with tetrahydrofolate (THF) serving as the one-carbon carrier. This reaction serves as the major source of one-carbon groups required for the biosynthesis of purines, thymidylate, methionine, and other important biomolecules. Also exhibits THF-independent aldolase activity toward beta-hydroxyamino acids, producing glycine and aldehydes, via a retro-aldol mechanism. This chain is Serine hydroxymethyltransferase, found in Flavobacterium psychrophilum (strain ATCC 49511 / DSM 21280 / CIP 103535 / JIP02/86).